Consider the following 511-residue polypeptide: Cytochrome P450 monooxygenase roqR (511 aa).

The N-terminal stretch at 1-23 (MSGYVLLTVQLAAVLLLVTLWRA) is a signal peptide. N-linked (GlcNAc...) asparagine glycans are attached at residues N364, N373, and N383. C455 is a heme binding site.

It belongs to the cytochrome P450 family. It depends on heme as a cofactor.

The protein operates within alkaloid biosynthesis. Its function is as follows. Cytochrome P450 monooxygenase; part of the gene cluster that mediates the biosynthesis of the mycotoxins roquefortine C and meleagrin. The first stage is catalyzed by the dipeptide synthase roqA which condenses histidine and tryptophan to produce histidyltryptophanyldiketopiperazine (HTD). HTD is then converted to roquefortine C through two possible pathways. In the first pathway, prenyltransferase roqD transforms HTD to the intermediate roquefortine D, which is in turn converted to roquefortine C by the cytochrome P450 monooxygenase roqR. In the second pathway, HTD is first converted to the intermediate dehydrohistidyltryptophanyldi-ketopiperazine (DHTD) by roqR which is then prenylated by roqD to form roquefortine C. Roquefortine C can be further transformed to meleagrin via three more reactions including oxydation to glandicolin A by roqM, which is further reduced to glandicoline B by roqO. Finally, glandicoline B is converted to meleagrin by the glandicoline B O-methyltransferase roqN. More studies identified further branching and additional metabolites produced by the roquefortine/meleagrin cluster, including roquefortine F, roquefortine L, roquefortine M, roquefortine N and neoxaline. This Penicillium rubens (strain ATCC 28089 / DSM 1075 / NRRL 1951 / Wisconsin 54-1255) (Penicillium chrysogenum) protein is Cytochrome P450 monooxygenase roqR.